The chain runs to 202 residues: Small ribosomal subunit protein uS4 (202 aa).

The interval 22-43 (TRKSARRAYPPGQHGQNRKKRS) is disordered. The 63-residue stretch at 90–152 (MRLDNTVFRL…AQSRKLVEAN (63 aa)) folds into the S4 RNA-binding domain.

The protein belongs to the universal ribosomal protein uS4 family. In terms of assembly, part of the 30S ribosomal subunit. Contacts protein S5. The interaction surface between S4 and S5 is involved in control of translational fidelity.

Its function is as follows. One of the primary rRNA binding proteins, it binds directly to 16S rRNA where it nucleates assembly of the body of the 30S subunit. Functionally, with S5 and S12 plays an important role in translational accuracy. In Nostoc punctiforme (strain ATCC 29133 / PCC 73102), this protein is Small ribosomal subunit protein uS4.